The chain runs to 521 residues: Bifunctional purine biosynthesis protein PurH (521 aa).

In terms of domain architecture, MGS-like spans 1-145 (MIKQALISVS…KNHRDVTVVV (145 aa)).

It belongs to the PurH family.

It catalyses the reaction (6R)-10-formyltetrahydrofolate + 5-amino-1-(5-phospho-beta-D-ribosyl)imidazole-4-carboxamide = 5-formamido-1-(5-phospho-D-ribosyl)imidazole-4-carboxamide + (6S)-5,6,7,8-tetrahydrofolate. The enzyme catalyses IMP + H2O = 5-formamido-1-(5-phospho-D-ribosyl)imidazole-4-carboxamide. The protein operates within purine metabolism; IMP biosynthesis via de novo pathway; 5-formamido-1-(5-phospho-D-ribosyl)imidazole-4-carboxamide from 5-amino-1-(5-phospho-D-ribosyl)imidazole-4-carboxamide (10-formyl THF route): step 1/1. It participates in purine metabolism; IMP biosynthesis via de novo pathway; IMP from 5-formamido-1-(5-phospho-D-ribosyl)imidazole-4-carboxamide: step 1/1. This chain is Bifunctional purine biosynthesis protein PurH, found in Paraburkholderia xenovorans (strain LB400).